The following is a 333-amino-acid chain: Homeobox protein engrailed-2 (333 aa).

3 disordered regions span residues 1–49 (MEEN…RALM), 95–206 (GRGG…GANL), and 223–250 (SDRP…PRTA). Composition is skewed to gly residues over residues 25–36 (PGGGSGGGGGSS) and 95–117 (GRGG…GAGG). Low complexity-rich tracts occupy residues 142 to 151 (PLPAAGSDSP) and 191 to 200 (LSVSSDSDSS). A DNA-binding region (homeobox) is located at residues 244–303 (DKRPRTAFTAEQLQRLKAEFQTNRYLTEQRRQSLAQELSLNESQIKIWFQNKRAKIKKAT).

This sequence belongs to the engrailed homeobox family.

The protein localises to the nucleus. In Homo sapiens (Human), this protein is Homeobox protein engrailed-2 (EN2).